Consider the following 238-residue polypeptide: Flagellar L-ring protein (238 aa).

The first 17 residues, Met-1–Gly-17, serve as a signal peptide directing secretion. A lipid anchor (N-palmitoyl cysteine) is attached at Cys-18. A lipid anchor (S-diacylglycerol cysteine) is attached at Cys-18.

Belongs to the FlgH family. As to quaternary structure, the basal body constitutes a major portion of the flagellar organelle and consists of four rings (L,P,S, and M) mounted on a central rod.

The protein resides in the cell outer membrane. The protein localises to the bacterial flagellum basal body. Functionally, assembles around the rod to form the L-ring and probably protects the motor/basal body from shearing forces during rotation. This chain is Flagellar L-ring protein, found in Nitratidesulfovibrio vulgaris (strain ATCC 29579 / DSM 644 / CCUG 34227 / NCIMB 8303 / VKM B-1760 / Hildenborough) (Desulfovibrio vulgaris).